Reading from the N-terminus, the 264-residue chain is Thymidylate synthase (264 aa).

Residues Arg-21 and 126-127 (RR) contribute to the dUMP site. Cys-146 serves as the catalytic Nucleophile. DUMP-binding positions include 166 to 169 (RSAD), Asn-177, and 207 to 209 (HLY). (6R)-5,10-methylene-5,6,7,8-tetrahydrofolate is bound at residue Asp-169. Ala-263 provides a ligand contact to (6R)-5,10-methylene-5,6,7,8-tetrahydrofolate.

The protein belongs to the thymidylate synthase family. Bacterial-type ThyA subfamily. In terms of assembly, homodimer.

It is found in the cytoplasm. The catalysed reaction is dUMP + (6R)-5,10-methylene-5,6,7,8-tetrahydrofolate = 7,8-dihydrofolate + dTMP. It participates in pyrimidine metabolism; dTTP biosynthesis. Catalyzes the reductive methylation of 2'-deoxyuridine-5'-monophosphate (dUMP) to 2'-deoxythymidine-5'-monophosphate (dTMP) while utilizing 5,10-methylenetetrahydrofolate (mTHF) as the methyl donor and reductant in the reaction, yielding dihydrofolate (DHF) as a by-product. This enzymatic reaction provides an intracellular de novo source of dTMP, an essential precursor for DNA biosynthesis. This Bradyrhizobium sp. (strain ORS 278) protein is Thymidylate synthase.